The following is a 315-amino-acid chain: Olfactory receptor 4E1 (315 aa).

Residues 1-33 (MEEAILLNQTSLVTYFRLRGLSVNHKARIAMFS) are Extracellular-facing. N-linked (GlcNAc...) asparagine glycosylation is present at Asn8. A helical transmembrane segment spans residues 34-54 (MFLIFYVLTLIGNVLIVITII). Topologically, residues 55 to 61 (YDHRLHT) are cytoplasmic. The chain crosses the membrane as a helical span at residues 62–82 (PMYFFLSNLSFIDVCHSTVTV). The Extracellular segment spans residues 83 to 101 (PKMLRDVWSEEKLISFDAC). A disulfide bond links Cys101 and Cys183. A helical membrane pass occupies residues 102–122 (VTQMFFLHLFACTEIFLLTVM). Over 123-143 (AYDRYVAICKPLQYMIVMNWK) the chain is Cytoplasmic. The helical transmembrane segment at 144 to 164 (VCVLLAVALWTGGTIHSIALT) threads the bilayer. Topologically, residues 165-208 (SLTIKLPYCGPDEIDNFFCDVPQVIKLACIDTHVIEILIVSNSG) are extracellular. The chain crosses the membrane as a helical span at residues 209 to 229 (LISVVCFVVLVVSYAVILVSL). The Cytoplasmic segment spans residues 230 to 240 (RQQISKGKRKA). The chain crosses the membrane as a helical span at residues 241 to 261 (LSTCAAHLTVVTLFLGHCIFI). Topologically, residues 262–272 (YSRPSTSLPED) are extracellular. A helical membrane pass occupies residues 273–293 (KVVSVFFTAVTPLLNPIIYTL). Topologically, residues 294–315 (RNEEMKSALNKLVGRKERKEEK) are cytoplasmic.

The protein belongs to the G-protein coupled receptor 1 family.

The protein resides in the cell membrane. Functionally, odorant receptor. The chain is Olfactory receptor 4E1 (OR4E1) from Homo sapiens (Human).